We begin with the raw amino-acid sequence, 257 residues long: Putative phosphatase YkrA (257 aa).

Aspartate 9 acts as the Nucleophile in catalysis. A Mg(2+)-binding site is contributed by aspartate 9. A phosphate-binding site is contributed by isoleucine 10. Position 11 (aspartate 11) interacts with Mg(2+). Phosphate is bound by residues 43 to 44 and lysine 183; that span reads SG. Residue aspartate 206 participates in Mg(2+) binding. Asparagine 209 is a binding site for phosphate.

The protein belongs to the HAD-like hydrolase superfamily. Cof family. It depends on Mg(2+) as a cofactor.

The protein is Putative phosphatase YkrA (ykrA) of Bacillus subtilis (strain 168).